The chain runs to 929 residues: Lon protease homolog 2, peroxisomal (929 aa).

A Lon N-terminal domain is found at 11–257 (LPLVPLPKGS…RVVEILTRQL (247 aa)). The interval 302–325 (GLTPPGLSAGRNNDNDDKESNEVD) is disordered. Residue 484–491 (GPPGVGKT) coordinates ATP. Residues 727-914 (HGRPGVVTGL…WEAIRQVWPD (188 aa)) enclose the Lon proteolytic domain. Catalysis depends on residues serine 820 and lysine 863. The Microbody targeting signal signature appears at 927 to 929 (SRL).

This sequence belongs to the peptidase S16 family.

Its subcellular location is the peroxisome matrix. The enzyme catalyses Hydrolysis of proteins in presence of ATP.. ATP-dependent serine protease that mediates the selective degradation of misfolded and unassembled polypeptides in the peroxisomal matrix. Necessary for type 2 peroxisome targeting signal (PTS2)-containing protein processing and facilitates peroxisome matrix protein import. The polypeptide is Lon protease homolog 2, peroxisomal (Aspergillus niger (strain ATCC MYA-4892 / CBS 513.88 / FGSC A1513)).